We begin with the raw amino-acid sequence, 310 residues long: Eukaryotic translation initiation factor 3 subunit G (310 aa).

Disordered stretches follow at residues 1 to 32 (MPTE…PVTK) and 179 to 229 (TGDK…DDNA). A compositionally biased stretch (low complexity) spans 187-196 (GAEPEPAQAP). A compositionally biased stretch (basic and acidic residues) spans 211 to 229 (GGSRRGESMQPNRRADDNA). The 79-residue stretch at 229–307 (ATIRVTNLSE…LILNVEWAKP (79 aa)) folds into the RRM domain.

The protein belongs to the eIF-3 subunit G family. As to quaternary structure, component of the eukaryotic translation initiation factor 3 (eIF-3) complex, which is composed of 13 subunits: eif3a, eif3b, eif3c, eif3d, eif3e, eif3f, eif3g, eif3h, eif3i, eif3j, eif3k, eif3l and eif3m.

It is found in the cytoplasm. Functionally, RNA-binding component of the eukaryotic translation initiation factor 3 (eIF-3) complex, which is involved in protein synthesis of a specialized repertoire of mRNAs and, together with other initiation factors, stimulates binding of mRNA and methionyl-tRNAi to the 40S ribosome. The eIF-3 complex specifically targets and initiates translation of a subset of mRNAs involved in cell proliferation. This subunit can bind 18S rRNA. The chain is Eukaryotic translation initiation factor 3 subunit G (eif3g) from Xenopus tropicalis (Western clawed frog).